The primary structure comprises 160 residues: Putative 4-hydroxy-4-methyl-2-oxoglutarate aldolase (160 aa).

Substrate contacts are provided by residues G76 to L79 and R98. D99 contacts a divalent metal cation.

This sequence belongs to the class II aldolase/RraA-like family. In terms of assembly, homotrimer. A divalent metal cation serves as cofactor.

The catalysed reaction is 4-hydroxy-4-methyl-2-oxoglutarate = 2 pyruvate. It catalyses the reaction oxaloacetate + H(+) = pyruvate + CO2. Its function is as follows. Catalyzes the aldol cleavage of 4-hydroxy-4-methyl-2-oxoglutarate (HMG) into 2 molecules of pyruvate. Also contains a secondary oxaloacetate (OAA) decarboxylase activity due to the common pyruvate enolate transition state formed following C-C bond cleavage in the retro-aldol and decarboxylation reactions. The sequence is that of Putative 4-hydroxy-4-methyl-2-oxoglutarate aldolase from Deinococcus radiodurans (strain ATCC 13939 / DSM 20539 / JCM 16871 / CCUG 27074 / LMG 4051 / NBRC 15346 / NCIMB 9279 / VKM B-1422 / R1).